We begin with the raw amino-acid sequence, 89 residues long: Small ribosomal subunit protein bS20 (89 aa).

A disordered region spans residues 1–27; sequence MANIKSAKKDSIISEERRKKNASQRSK. Positions 7–18 are enriched in basic and acidic residues; the sequence is AKKDSIISEERR.

This sequence belongs to the bacterial ribosomal protein bS20 family.

In terms of biological role, binds directly to 16S ribosomal RNA. The chain is Small ribosomal subunit protein bS20 from Buchnera aphidicola subsp. Schizaphis graminum (strain Sg).